Here is a 364-residue protein sequence, read N- to C-terminus: Aminomethyltransferase (364 aa).

This sequence belongs to the GcvT family. The glycine cleavage system is composed of four proteins: P, T, L and H.

The enzyme catalyses N(6)-[(R)-S(8)-aminomethyldihydrolipoyl]-L-lysyl-[protein] + (6S)-5,6,7,8-tetrahydrofolate = N(6)-[(R)-dihydrolipoyl]-L-lysyl-[protein] + (6R)-5,10-methylene-5,6,7,8-tetrahydrofolate + NH4(+). Functionally, the glycine cleavage system catalyzes the degradation of glycine. In Bacillus licheniformis (strain ATCC 14580 / DSM 13 / JCM 2505 / CCUG 7422 / NBRC 12200 / NCIMB 9375 / NCTC 10341 / NRRL NRS-1264 / Gibson 46), this protein is Aminomethyltransferase.